The primary structure comprises 91 residues: MAHKKAGGSSRNGRDSEAKRLGVKVYGSELIPAGSIIVRQRGTKFHAGENVGQGKDHTLFAKVDGYVEFTVKGAQQRKTVNVVPYTGVDGE.

The protein belongs to the bacterial ribosomal protein bL27 family.

The chain is Large ribosomal subunit protein bL27 from Chromobacterium violaceum (strain ATCC 12472 / DSM 30191 / JCM 1249 / CCUG 213 / NBRC 12614 / NCIMB 9131 / NCTC 9757 / MK).